The chain runs to 417 residues: MAVTQILVVFASALLLSMFFTGVDSTRSNETWHEHAVENPEEVAAMVDMSIRNSTARRRLGYFSCSTGNPIDDCWRCDRRWQSRRKHLANCAIGFGRNAIGGRDGRYYVVSDPNDDNPVNPKPGTLRHAVIQEEPLWIVFKRDMVITLKEELIMNSFKTIDGRGVNVHIANGACITIQFVTNIIIHGIHIHDCRPTGNAMVRSSPSHYGWRTMADGDGISIFGSSHIWIDHNSLSNCADGLIDAVMASTAITISNNYFTHHNEVMLLGHSDTYTRDKVMQVTIAYNHFGEGLIQRMPRCRHGYFHVVNNDYTHWEMYAIGGSASPTINSQGNRYLAPRNRFAKEVTKRDYAGQWQWRHWNWRSEGDLFLNGAFFTRSGSGLGASYARASSLAAKSSSLVGVITYNAGALNCRGGRRC.

Residues 1-25 (MAVTQILVVFASALLLSMFFTGVDS) form the signal peptide. 2 N-linked (GlcNAc...) asparagine glycosylation sites follow: asparagine 29 and asparagine 53. Residues aspartate 215, aspartate 239, and aspartate 243 each contribute to the Ca(2+) site. Arginine 295 is an active-site residue.

This sequence belongs to the polysaccharide lyase 1 family. The cofactor is Ca(2+).

The enzyme catalyses Eliminative cleavage of (1-&gt;4)-alpha-D-galacturonan to give oligosaccharides with 4-deoxy-alpha-D-galact-4-enuronosyl groups at their non-reducing ends.. It functions in the pathway glycan metabolism; pectin degradation; 2-dehydro-3-deoxy-D-gluconate from pectin: step 2/5. The sequence is that of Probable pectate lyase 20 from Arabidopsis thaliana (Mouse-ear cress).